The following is a 616-amino-acid chain: Dihydroxy-acid dehydratase (616 aa).

Mg(2+) is bound at residue Asp-81. Residue Cys-122 participates in [2Fe-2S] cluster binding. 2 residues coordinate Mg(2+): Asp-123 and Lys-124. Lys-124 bears the N6-carboxylysine mark. [2Fe-2S] cluster is bound at residue Cys-197. Glu-493 contributes to the Mg(2+) binding site. The active-site Proton acceptor is the Ser-519.

The protein belongs to the IlvD/Edd family. In terms of assembly, homodimer. It depends on [2Fe-2S] cluster as a cofactor. Mg(2+) is required as a cofactor.

The catalysed reaction is (2R)-2,3-dihydroxy-3-methylbutanoate = 3-methyl-2-oxobutanoate + H2O. It carries out the reaction (2R,3R)-2,3-dihydroxy-3-methylpentanoate = (S)-3-methyl-2-oxopentanoate + H2O. It functions in the pathway amino-acid biosynthesis; L-isoleucine biosynthesis; L-isoleucine from 2-oxobutanoate: step 3/4. It participates in amino-acid biosynthesis; L-valine biosynthesis; L-valine from pyruvate: step 3/4. Its function is as follows. Functions in the biosynthesis of branched-chain amino acids. Catalyzes the dehydration of (2R,3R)-2,3-dihydroxy-3-methylpentanoate (2,3-dihydroxy-3-methylvalerate) into 2-oxo-3-methylpentanoate (2-oxo-3-methylvalerate) and of (2R)-2,3-dihydroxy-3-methylbutanoate (2,3-dihydroxyisovalerate) into 2-oxo-3-methylbutanoate (2-oxoisovalerate), the penultimate precursor to L-isoleucine and L-valine, respectively. The protein is Dihydroxy-acid dehydratase of Corynebacterium kroppenstedtii (strain DSM 44385 / JCM 11950 / CIP 105744 / CCUG 35717).